Here is a 616-residue protein sequence, read N- to C-terminus: Dihydroxy-acid dehydratase (616 aa).

Mg(2+) is bound at residue Asp-81. Cys-122 contacts [2Fe-2S] cluster. Residues Asp-123 and Lys-124 each coordinate Mg(2+). Position 124 is an N6-carboxylysine (Lys-124). Residue Cys-195 coordinates [2Fe-2S] cluster. A Mg(2+)-binding site is contributed by Glu-491. The Proton acceptor role is filled by Ser-517.

Belongs to the IlvD/Edd family. Homodimer. [2Fe-2S] cluster is required as a cofactor. It depends on Mg(2+) as a cofactor.

The enzyme catalyses (2R)-2,3-dihydroxy-3-methylbutanoate = 3-methyl-2-oxobutanoate + H2O. It carries out the reaction (2R,3R)-2,3-dihydroxy-3-methylpentanoate = (S)-3-methyl-2-oxopentanoate + H2O. It participates in amino-acid biosynthesis; L-isoleucine biosynthesis; L-isoleucine from 2-oxobutanoate: step 3/4. It functions in the pathway amino-acid biosynthesis; L-valine biosynthesis; L-valine from pyruvate: step 3/4. Its function is as follows. Functions in the biosynthesis of branched-chain amino acids. Catalyzes the dehydration of (2R,3R)-2,3-dihydroxy-3-methylpentanoate (2,3-dihydroxy-3-methylvalerate) into 2-oxo-3-methylpentanoate (2-oxo-3-methylvalerate) and of (2R)-2,3-dihydroxy-3-methylbutanoate (2,3-dihydroxyisovalerate) into 2-oxo-3-methylbutanoate (2-oxoisovalerate), the penultimate precursor to L-isoleucine and L-valine, respectively. The sequence is that of Dihydroxy-acid dehydratase from Salmonella heidelberg (strain SL476).